A 126-amino-acid chain; its full sequence is Histone H2B type 1-M (126 aa).

Positions 1–36 are disordered; the sequence is MPEPVKSAPVPKKGSKKAINKAQKKDGKKRKRSRKE. An N-acetylproline modification is found at Pro2. Glu3 bears the ADP-ribosyl glutamic acid mark. The residue at position 6 (Lys6) is an N6-(2-hydroxyisobutyryl)lysine; alternate. N6-(beta-hydroxybutyryl)lysine; alternate is present on Lys6. Lys6 is modified (N6-acetyllysine; alternate). Position 6 is an N6-butyryllysine; alternate (Lys6). The residue at position 6 (Lys6) is an N6-crotonyllysine; alternate. N6-lactoyllysine; alternate is present on Lys6. Lys6 is covalently cross-linked (Glycyl lysine isopeptide (Lys-Gly) (interchain with G-Cter in SUMO2); alternate). ADP-ribosylserine is present on Ser7. Lys12 carries the post-translational modification N6-(beta-hydroxybutyryl)lysine; alternate. N6-acetyllysine; alternate occurs at positions 12 and 13. N6-crotonyllysine; alternate is present on residues Lys12 and Lys13. At Lys12 the chain carries N6-lactoyllysine; alternate. Lys13 is modified (N6-(2-hydroxyisobutyryl)lysine; alternate). Ser15 is subject to Phosphoserine; by STK4/MST1. Lys16, Lys17, Lys21, and Lys24 each carry N6-acetyllysine; alternate. N6-crotonyllysine; alternate occurs at positions 16, 17, 21, and 24. Lys16, Lys17, Lys21, and Lys24 each carry N6-lactoyllysine; alternate. 2 positions are modified to N6-(beta-hydroxybutyryl)lysine; alternate: Lys17 and Lys21. The residue at position 17 (Lys17) is an N6-glutaryllysine; alternate. Lys21 and Lys24 each carry N6-(2-hydroxyisobutyryl)lysine; alternate. N6-butyryllysine; alternate is present on Lys21. A Glycyl lysine isopeptide (Lys-Gly) (interchain with G-Cter in SUMO2); alternate cross-link involves residue Lys21. Lys25 carries the post-translational modification N6-(2-hydroxyisobutyryl)lysine. An N6-(2-hydroxyisobutyryl)lysine; alternate modification is found at Lys35. Lys35 carries the N6-(beta-hydroxybutyryl)lysine; alternate modification. At Lys35 the chain carries N6-crotonyllysine; alternate. Lys35 carries the post-translational modification N6-glutaryllysine; alternate. An N6-succinyllysine; alternate modification is found at Lys35. Lys35 participates in a covalent cross-link: Glycyl lysine isopeptide (Lys-Gly) (interchain with G-Cter in ubiquitin); alternate. Glu36 is modified (polyADP-ribosyl glutamic acid). At Ser37 the chain carries Phosphoserine; by AMPK. Residues Lys44, Lys47, and Lys58 each carry the N6-(2-hydroxyisobutyryl)lysine; alternate modification. An N6-lactoyllysine; alternate modification is found at Lys44. An N6-glutaryllysine; alternate mark is found at Lys44 and Lys47. At Lys47 the chain carries N6-methyllysine; alternate. Residue Lys58 is modified to N6,N6-dimethyllysine; alternate. Arg80 carries the dimethylated arginine modification. Lys86 is modified (N6-(2-hydroxyisobutyryl)lysine; alternate). N6-(beta-hydroxybutyryl)lysine; alternate is present on Lys86. At Lys86 the chain carries N6-acetyllysine; alternate. At Lys86 the chain carries N6-lactoyllysine; alternate. Lys86 is subject to N6,N6,N6-trimethyllysine; alternate. 2 positions are modified to omega-N-methylarginine: Arg87 and Arg93. Lys109 bears the N6-(2-hydroxyisobutyryl)lysine; alternate mark. At Lys109 the chain carries N6-lactoyllysine; alternate. The residue at position 109 (Lys109) is an N6-glutaryllysine; alternate. N6-methyllysine; alternate is present on Lys109. O-linked (GlcNAc) serine glycosylation occurs at Ser113. Thr116 is modified (phosphothreonine). Residues Lys117 and Lys121 each carry the N6-(2-hydroxyisobutyryl)lysine; alternate modification. 2 positions are modified to N6-(beta-hydroxybutyryl)lysine; alternate: Lys117 and Lys121. N6-lactoyllysine; alternate is present on residues Lys117 and Lys121. Lys117 and Lys121 each carry N6-glutaryllysine; alternate. N6-succinyllysine; alternate occurs at positions 117 and 121. An N6-malonyllysine; alternate modification is found at Lys117. Lys117 is modified (N6-methylated lysine; alternate). A Glycyl lysine isopeptide (Lys-Gly) (interchain with G-Cter in ubiquitin); alternate cross-link involves residue Lys121.

Belongs to the histone H2B family. The nucleosome is a histone octamer containing two molecules each of H2A, H2B, H3 and H4 assembled in one H3-H4 heterotetramer and two H2A-H2B heterodimers. The octamer wraps approximately 147 bp of DNA. In terms of processing, monoubiquitination at Lys-35 (H2BK34Ub) by the MSL1/MSL2 dimer is required for histone H3 'Lys-4' (H3K4me) and 'Lys-79' (H3K79me) methylation and transcription activation at specific gene loci, such as HOXA9 and MEIS1 loci. Similarly, monoubiquitination at Lys-121 (H2BK120Ub) by the RNF20/40 complex gives a specific tag for epigenetic transcriptional activation and is also prerequisite for histone H3 'Lys-4' and 'Lys-79' methylation. It also functions cooperatively with the FACT dimer to stimulate elongation by RNA polymerase II. H2BK120Ub also acts as a regulator of mRNA splicing: deubiquitination by USP49 is required for efficient cotranscriptional splicing of a large set of exons. Post-translationally, phosphorylation at Ser-37 (H2BS36ph) by AMPK in response to stress promotes transcription. Phosphorylated on Ser-15 (H2BS14ph) by STK4/MST1 during apoptosis; which facilitates apoptotic chromatin condensation. Also phosphorylated on Ser-15 in response to DNA double strand breaks (DSBs), and in correlation with somatic hypermutation and immunoglobulin class-switch recombination. GlcNAcylation at Ser-113 promotes monoubiquitination of Lys-121. It fluctuates in response to extracellular glucose, and associates with transcribed genes. In terms of processing, ADP-ribosylated by PARP1 or PARP2 on Ser-7 (H2BS6ADPr) in response to DNA damage. H2BS6ADPr promotes recruitment of CHD1L. Mono-ADP-ribosylated on Glu-3 (H2BE2ADPr) by PARP3 in response to single-strand breaks. Poly ADP-ribosylation on Glu-36 (H2BE35ADPr) by PARP1 regulates adipogenesis: it inhibits phosphorylation at Ser-37 (H2BS36ph), thereby blocking expression of pro-adipogenetic genes. Post-translationally, crotonylation (Kcr) is specifically present in male germ cells and marks testis-specific genes in post-meiotic cells, including X-linked genes that escape sex chromosome inactivation in haploid cells. Crotonylation marks active promoters and enhancers and confers resistance to transcriptional repressors. It is also associated with post-meiotically activated genes on autosomes. Lactylated in macrophages by EP300/P300 by using lactoyl-CoA directly derived from endogenous or exogenous lactate, leading to stimulates gene transcription.

It is found in the nucleus. The protein localises to the chromosome. In terms of biological role, core component of nucleosome. Nucleosomes wrap and compact DNA into chromatin, limiting DNA accessibility to the cellular machineries which require DNA as a template. Histones thereby play a central role in transcription regulation, DNA repair, DNA replication and chromosomal stability. DNA accessibility is regulated via a complex set of post-translational modifications of histones, also called histone code, and nucleosome remodeling. This chain is Histone H2B type 1-M, found in Homo sapiens (Human).